Reading from the N-terminus, the 229-residue chain is Potassium/proton antiporter CemA (229 aa).

Transmembrane regions (helical) follow at residues 6–26 (AFIP…ISLC), 107–127 (IFHF…SFWG), 152–172 (FLIL…GWEL), and 189–209 (ILSG…KYWI).

The protein belongs to the CemA family.

It is found in the plastid. The protein localises to the chloroplast inner membrane. It carries out the reaction K(+)(in) + H(+)(out) = K(+)(out) + H(+)(in). Its function is as follows. Contributes to K(+)/H(+) antiport activity by supporting proton efflux to control proton extrusion and homeostasis in chloroplasts in a light-dependent manner to modulate photosynthesis. Prevents excessive induction of non-photochemical quenching (NPQ) under continuous-light conditions. Indirectly promotes efficient inorganic carbon uptake into chloroplasts. This chain is Potassium/proton antiporter CemA, found in Aethionema grandiflorum (Persian stone-cress).